Reading from the N-terminus, the 305-residue chain is Ribosomal RNA small subunit methyltransferase H (305 aa).

Residues 30–32, Asp-49, Phe-74, Asp-96, and Gln-103 each bind S-adenosyl-L-methionine; that span reads GGH.

This sequence belongs to the methyltransferase superfamily. RsmH family.

Its subcellular location is the cytoplasm. It carries out the reaction cytidine(1402) in 16S rRNA + S-adenosyl-L-methionine = N(4)-methylcytidine(1402) in 16S rRNA + S-adenosyl-L-homocysteine + H(+). Functionally, specifically methylates the N4 position of cytidine in position 1402 (C1402) of 16S rRNA. This chain is Ribosomal RNA small subunit methyltransferase H, found in Francisella tularensis subsp. mediasiatica (strain FSC147).